The chain runs to 110 residues: CHH-like protein (110 aa).

The N-terminal stretch at 1–23 is a signal peptide; sequence MHLSSVQFAWAALVALAVSAAGA. The propeptide occupies 24-35; sequence LPSSAPHHVERR. Cystine bridges form between C42–C78, C58–C74, and C61–C87. Position 107 is a valine amide (V107).

The protein belongs to the arthropod CHH/MIH/GIH/VIH hormone family.

It localises to the secreted. The polypeptide is CHH-like protein (CHHL) (Bombyx mori (Silk moth)).